We begin with the raw amino-acid sequence, 469 residues long: Protein RUFY3 (469 aa).

Residues Thr-5 and Thr-12 each carry the phosphothreonine modification. Residues Tyr-27, Ser-34, and Ser-49 each carry the phosphoserine modification. Thr-51 is modified (phosphothreonine). Asp-53 bears the Phosphoserine mark. Residues 95–227 (DSDYAPLQQF…IDANFCMKGE (133 aa)) enclose the RUN domain. 2 coiled-coil regions span residues 271-362 (NRHL…VEKE) and 422-463 (KSEL…AANK). Over residues 321–337 (SYLLESNRKGPKQDRTA) the composition is skewed to basic and acidic residues. The tract at residues 321–342 (SYLLESNRKGPKQDRTAEGQAL) is disordered.

Interacts with PAK1. Interacts (via C-terminus) with Ras-related Rab-5 proteins. Interacts (via C-terminus) with Ras-related Rap-2 proteins. Interacts with PIK3CA and PIK3R1. Interacts (via N-terminus) with FSCN1; this interaction induces neuron axon development. Interacts with DBN1. Interacts (via the second coiled coil) with GTP-, but not GDP-bound ARL8A and ARL8B. Interacts with dynactin/DCTN1 and the dynein intermediate chain DYNC1I1/2. Directly interacts with DYNC1LI1. Phosphorylated by PAK1. Isoform 1 is partially phosphorylated. In terms of tissue distribution, expressed in brain (at protein level).

It localises to the cytoplasm. The protein localises to the endomembrane system. Its subcellular location is the cell projection. It is found in the invadopodium. The protein resides in the growth cone. It localises to the perikaryon. The protein localises to the filopodium. Its subcellular location is the lamellipodium. It is found in the lysosome. Its function is as follows. ARL8 effector that promotes the coupling of endolysosomes to dynein-dynactin for retrograde transport along microtubules. Acts by binding both GTP-bound ARL8 and dynein-dynactin. In nonneuronal cells, promotes concentration of endolysosomes in the juxtanuclear area. In hippocampal neurons, drives retrograde transport of endolysosomes from the axon to the soma. Plays a role in the generation of neuronal polarity formation and axon growth. Implicated in the formation of a single axon by developing neurons. May inhibit the formation of additional axons by inhibition of PI3K in minor neuronal processes. Plays a role in the formation of F-actin-enriched protrusive structures at the cell periphery. Plays a role in cytoskeletal organization by regulating the subcellular localization of FSCN1 and DBN1 at axonal growth cones. The sequence is that of Protein RUFY3 from Mus musculus (Mouse).